Consider the following 221-residue polypeptide: uncharacterized protein (221 aa).

An N-terminal signal peptide occupies residues 1–30; it reads MAKFNNNILLIILIIVILFIIFYFLNKNNQ.

Its subcellular location is the virion. This is an uncharacterized protein from Acanthamoeba polyphaga mimivirus (APMV).